We begin with the raw amino-acid sequence, 87 residues long: MADKRKYTRKYCKFTEAKIEFIDYKDTALLKYCLSERFKIMPRRLTGTSKKYQEMVEKAIKRARQAALIPYIVDRDNVVVNPFEILG.

This sequence belongs to the bacterial ribosomal protein bS18 family. As to quaternary structure, part of the 30S ribosomal subunit. Forms a tight heterodimer with protein bS6.

Binds as a heterodimer with protein bS6 to the central domain of the 16S rRNA, where it helps stabilize the platform of the 30S subunit. The chain is Small ribosomal subunit protein bS18 from Campylobacter hominis (strain ATCC BAA-381 / DSM 21671 / CCUG 45161 / LMG 19568 / NCTC 13146 / CH001A).